Here is a 400-residue protein sequence, read N- to C-terminus: Renin (400 aa).

An N-terminal signal peptide occupies residues 1 to 17; it reads MPLWGLLLALWGCSTFS. Positions 18–59 are cleaved as a propeptide — activation peptide; sequence LPADTAAFRRIFLKKMPSVRESLKERGVDMAQLGAEWSQLTK. N-linked (GlcNAc...) asparagine glycosylation occurs at Asn65. The 318-residue stretch at 80–397 folds into the Peptidase A1 domain; it reads YYGEIGIGTP…DRRNNRIGFA (318 aa). Asp98 is an active-site residue. A disulfide bridge links Cys111 with Cys118. Residue Asn135 is glycosylated (N-linked (GlcNAc...) asparagine). Cys277 and Cys281 form a disulfide bridge. The active site involves Asp286. An intrachain disulfide couples Cys320 to Cys356. A glycan (N-linked (GlcNAc...) asparagine) is linked at Asn353.

Belongs to the peptidase A1 family. Interacts with ATP6AP2. Kidney.

The protein localises to the secreted. The protein resides in the membrane. The catalysed reaction is Cleavage of Leu-|-Xaa bond in angiotensinogen to generate angiotensin I.. Interaction with ATP6AP2 results in a 5-fold increased efficiency in angiotensinogen processing. Its function is as follows. Renin is a highly specific endopeptidase, whose only known function is to generate angiotensin I from angiotensinogen in the plasma, initiating a cascade of reactions that produce an elevation of blood pressure and increased sodium retention by the kidney. The chain is Renin (REN) from Ovis aries (Sheep).